The primary structure comprises 399 residues: Syndecan (399 aa).

An N-terminal signal peptide occupies residues 1–28; that stretch reads MKPKQKISVEPLLLVAILIGVLVAATHA. Positions 28–319 are disordered; sequence AQDQKSVKPS…TKGIDHRPNG (292 aa). The Extracellular segment spans residues 29-340; the sequence is QDQKSVKPSA…TSSFFSQPGI (312 aa). The segment covering 36–46 has biased composition (low complexity); the sequence is PSAAAPSAAAS. O-linked (Xyl...) (glycosaminoglycan) serine glycosylation occurs at S62. Residues 67–77 are compositionally biased toward basic and acidic residues; that stretch reads GIHEDLEKDPD. Residues S79, S81, and S110 are each glycosylated (O-linked (Xyl...) (glycosaminoglycan) serine). The segment covering 99–116 has biased composition (polar residues); sequence SHNTRISQSSNSGINTAH. A compositionally biased stretch (low complexity) spans 117 to 172; it reads TPTQTSSTIPTTSTSTPMPTTTPTATTPASTTTAAATQISSFANSSSTTTTTLAPT. N-linked (GlcNAc...) asparagine glycosylation occurs at N160. Over residues 191–214 the composition is skewed to acidic residues; that stretch reads TESSGDGIDADAEDDDEDDGDDKD. S194 carries O-linked (Xyl...) (glycosaminoglycan) serine glycosylation. Residues 215 to 226 are compositionally biased toward basic and acidic residues; that stretch reads YDYNKELDKEID. Over residues 253–270 the composition is skewed to acidic residues; that stretch reads DEIDVDGGDEDDNGDSDI. The span at 299 to 309 shows a compositional bias: polar residues; the sequence is PNTNVNSQPSD. A helical transmembrane segment spans residues 341-365; that stretch reads LAAVIGGAVVGLLCAILVVMFIVYR. Over 366–399 the chain is Cytoplasmic; the sequence is MRKKDEGSYALDEPKRSPANNSYAKNANNREFYA. Positions 373-399 are disordered; the sequence is SYALDEPKRSPANNSYAKNANNREFYA. The span at 383–399 shows a compositional bias: polar residues; that stretch reads PANNSYAKNANNREFYA.

The protein belongs to the syndecan proteoglycan family. As to expression, in 13-16 hours embryos, expressed in lymph glands, peripheral and central nervous system and basal surfaces of gut epithelia. Sdc and robo are coexpressed in domains adjacent to slit; in tracheal pits and midline glia cells.

It localises to the membrane. Its function is as follows. Cell surface proteoglycan that bears heparan sulfate. Required for axonal and myotube guidance, is a necessary component of slit/robo signaling and is required in the slit target cells. In Drosophila melanogaster (Fruit fly), this protein is Syndecan (Sdc).